Here is a 274-residue protein sequence, read N- to C-terminus: Type III pantothenate kinase (274 aa).

ATP is bound at residue 6-13 (DVGNTNTV). Substrate is bound by residues Tyr110 and 117-120 (GADR). Asp119 functions as the Proton acceptor in the catalytic mechanism. Residue Asp139 participates in K(+) binding. Thr142 contacts ATP. Thr194 is a binding site for substrate.

This sequence belongs to the type III pantothenate kinase family. Homodimer. The cofactor is NH4(+). K(+) is required as a cofactor.

The protein localises to the cytoplasm. The enzyme catalyses (R)-pantothenate + ATP = (R)-4'-phosphopantothenate + ADP + H(+). Its pathway is cofactor biosynthesis; coenzyme A biosynthesis; CoA from (R)-pantothenate: step 1/5. Its function is as follows. Catalyzes the phosphorylation of pantothenate (Pan), the first step in CoA biosynthesis. The chain is Type III pantothenate kinase from Koribacter versatilis (strain Ellin345).